Here is a 177-residue protein sequence, read N- to C-terminus: Nuclear export protein (177 aa).

2 short sequence motifs (nuclear export signal) span residues 91–100 and 117–127; these read LWLPMKSLSL and MKHQILTRLKL.

Binds M1 protein. May interact with human nucleoporins and exportin XPO1/CRM1.

The protein localises to the virion. It localises to the host nucleus. Functionally, mediates the nuclear export of encapsidated genomic RNAs (ribonucleoproteins, RNPs). Acts as an adapter between viral RNPs complexes and the nuclear export machinery of the cell. Possesses no intrinsic RNA-binding activity, but includes a C-terminal M1-binding domain. This domain is believed to allow recognition of RNPs to which the M1 protein is bound. Because the M1 protein is not available in large quantities until the later stages of infection, such an indirect recognition mechanism probably ensures that genomic RNPs are not exported from the nucleus before sufficient quantities of viral mRNA and progeny genomic RNA have been synthesized. Furthermore, the RNPs enters the cytoplasm only when they have associated with the M1 protein that is necessary to guide them to the plasma membrane. May down-regulate viral RNA synthesis when overproduced. The polypeptide is Nuclear export protein (NS) (Influenza C virus (strain C/Great lakes/1167/1954)).